Here is a 1099-residue protein sequence, read N- to C-terminus: 1-phosphatidylinositol 4,5-bisphosphate phosphodiesterase 1 (1099 aa).

A compositionally biased stretch (basic and acidic residues) spans 1–10 (MLESLNRRNS). 2 disordered regions span residues 1–109 (MLES…SSTT) and 128–164 (ESRS…KSIQ). 2 stretches are compositionally biased toward low complexity: residues 43–66 (PPKS…KSDL) and 86–109 (PKQQ…SSTT). Over residues 131–141 (SIVSNNGGSPM) the composition is skewed to polar residues. A compositionally biased stretch (low complexity) spans 142 to 155 (SDSTTVTSTLSTDT). Residues 566–726 (YDYPLNEYFI…LKHKFIIKVK (161 aa)) form the PI-PLC X-box domain. Catalysis depends on residues H579 and H642. Substrate is bound by residues K724 and K726. Positions 742–780 (FTTSTTTTTTTTTTTTTATSLSEDNENNKSNSSSTSSFI) are disordered. Residues 743–778 (TTSTTTTTTTTTTTTTATSLSEDNENNKSNSSSTSS) show a composition bias toward low complexity. In terms of domain architecture, PI-PLC Y-box spans 794 to 912 (ELSNLGIYTQ…GYVLKPSVLR (119 aa)). Substrate is bound by residues S823 and R852. One can recognise a C2 domain in the interval 917-1071 (KSSSSNVDTR…QGYRYIYLND (155 aa)).

The catalysed reaction is a 1,2-diacyl-sn-glycero-3-phospho-(1D-myo-inositol-4,5-bisphosphate) + H2O = 1D-myo-inositol 1,4,5-trisphosphate + a 1,2-diacyl-sn-glycerol + H(+). Its function is as follows. The production of the second messenger molecules diacylglycerol (DAG) and inositol 1,4,5-trisphosphate (IP3) is mediated by activated phosphatidylinositol-specific phospholipase C enzymes. The sequence is that of 1-phosphatidylinositol 4,5-bisphosphate phosphodiesterase 1 (PLC1) from Candida albicans (Yeast).